The following is a 209-amino-acid chain: Ribosomal RNA large subunit methyltransferase E (209 aa).

The S-adenosyl-L-methionine site is built by Gly-63, Trp-65, Asp-83, Asp-99, and Asp-124. The active-site Proton acceptor is the Lys-164.

This sequence belongs to the class I-like SAM-binding methyltransferase superfamily. RNA methyltransferase RlmE family.

The protein localises to the cytoplasm. It catalyses the reaction uridine(2552) in 23S rRNA + S-adenosyl-L-methionine = 2'-O-methyluridine(2552) in 23S rRNA + S-adenosyl-L-homocysteine + H(+). Specifically methylates the uridine in position 2552 of 23S rRNA at the 2'-O position of the ribose in the fully assembled 50S ribosomal subunit. The polypeptide is Ribosomal RNA large subunit methyltransferase E (Shewanella sp. (strain MR-7)).